Here is a 544-residue protein sequence, read N- to C-terminus: Prolyl 4-hydroxylase subunit alpha-3 (544 aa).

Positions M1 to G19 are cleaved as a signal peptide. The stretch at L107–E131 forms a coiled coil. The stretch at E227–N260 is one TPR repeat. N248 carries an N-linked (GlcNAc...) asparagine glycan. The region spanning Y422–E529 is the Fe2OG dioxygenase domain. The Fe cation site is built by H440 and D442. The N-linked (GlcNAc...) asparagine glycan is linked to N482. H510 is a Fe cation binding site. Residue K520 participates in 2-oxoglutarate binding.

It belongs to the P4HA family. Heterotetramer of two alpha-3 chains and two beta chains (the beta chain is the multi-functional PDI). Fe(2+) is required as a cofactor. L-ascorbate serves as cofactor. In terms of processing, N-glycosylation plays no role in the catalytic activity.

The protein localises to the endoplasmic reticulum lumen. The enzyme catalyses L-prolyl-[collagen] + 2-oxoglutarate + O2 = trans-4-hydroxy-L-prolyl-[collagen] + succinate + CO2. Functionally, catalyzes the post-translational formation of 4-hydroxyproline in -Xaa-Pro-Gly- sequences in collagens and other proteins. The sequence is that of Prolyl 4-hydroxylase subunit alpha-3 (P4HA3) from Bos taurus (Bovine).